A 161-amino-acid chain; its full sequence is Nucleotide-binding protein Bamb_2603 (161 aa).

It belongs to the YajQ family.

Functionally, nucleotide-binding protein. In Burkholderia ambifaria (strain ATCC BAA-244 / DSM 16087 / CCUG 44356 / LMG 19182 / AMMD) (Burkholderia cepacia (strain AMMD)), this protein is Nucleotide-binding protein Bamb_2603.